The primary structure comprises 83 residues: U25-theraphotoxin-Cg1a (83 aa).

Positions 1–23 (MRFHTLLFLSFLLLVSCALICTA) are cleaved as a signal peptide. The propeptide occupies 24–48 (QHPGLEKSGMFHENVGKGQHIEEKR). Disulfide bonds link Cys50–Cys66, Cys57–Cys71, and Cys65–Cys81.

This sequence belongs to the neurotoxin 07 (Beta/delta-agtx) family. 03 (aga-4) subfamily. JZTX sub-subfamily. Expressed by the venom gland.

The protein localises to the secreted. Inhibits TTX-sensitive sodium currents in rat dorsal root ganglion (DRG) neurons. In Chilobrachys guangxiensis (Chinese earth tiger tarantula), this protein is U25-theraphotoxin-Cg1a.